The primary structure comprises 209 residues: Pyridoxal 5'-phosphate synthase subunit PdxT (209 aa).

L-glutamine is bound at residue 58-60 (GES). Cys90 (nucleophile) is an active-site residue. Residues Arg119 and 148–149 (IR) contribute to the L-glutamine site. Active-site charge relay system residues include His185 and Glu187.

The protein belongs to the glutaminase PdxT/SNO family. In the presence of PdxS, forms a dodecamer of heterodimers. Only shows activity in the heterodimer.

It carries out the reaction aldehydo-D-ribose 5-phosphate + D-glyceraldehyde 3-phosphate + L-glutamine = pyridoxal 5'-phosphate + L-glutamate + phosphate + 3 H2O + H(+). The catalysed reaction is L-glutamine + H2O = L-glutamate + NH4(+). It functions in the pathway cofactor biosynthesis; pyridoxal 5'-phosphate biosynthesis. Its function is as follows. Catalyzes the hydrolysis of glutamine to glutamate and ammonia as part of the biosynthesis of pyridoxal 5'-phosphate. The resulting ammonia molecule is channeled to the active site of PdxS. This is Pyridoxal 5'-phosphate synthase subunit PdxT from Clavibacter sepedonicus (Clavibacter michiganensis subsp. sepedonicus).